The following is a 193-amino-acid chain: Peptidyl-tRNA hydrolase (193 aa).

His17 is a binding site for tRNA. His22 (proton acceptor) is an active-site residue. The tRNA site is built by Phe68, Asn70, and Asn116.

Belongs to the PTH family. In terms of assembly, monomer.

The protein localises to the cytoplasm. It catalyses the reaction an N-acyl-L-alpha-aminoacyl-tRNA + H2O = an N-acyl-L-amino acid + a tRNA + H(+). In terms of biological role, hydrolyzes ribosome-free peptidyl-tRNAs (with 1 or more amino acids incorporated), which drop off the ribosome during protein synthesis, or as a result of ribosome stalling. Functionally, catalyzes the release of premature peptidyl moieties from peptidyl-tRNA molecules trapped in stalled 50S ribosomal subunits, and thus maintains levels of free tRNAs and 50S ribosomes. The chain is Peptidyl-tRNA hydrolase from Xanthomonas campestris pv. campestris (strain 8004).